Here is an 842-residue protein sequence, read N- to C-terminus: Elongation factor 2 (842 aa).

The 237-residue stretch at 17–253 (SNVRNMSVIA…LWGENYFNPK (237 aa)) folds into the tr-type G domain. Residues 26-33 (AHVDHGKS), 104-108 (DSPGH), and 158-161 (NKVD) contribute to the GTP site. Ser568 carries the phosphoserine modification. Thr574 is subject to Phosphothreonine. Residue His699 is modified to Diphthamide.

Belongs to the TRAFAC class translation factor GTPase superfamily. Classic translation factor GTPase family. EF-G/EF-2 subfamily.

It localises to the cytoplasm. Functionally, catalyzes the GTP-dependent ribosomal translocation step during translation elongation. During this step, the ribosome changes from the pre-translocational (PRE) to the post-translocational (POST) state as the newly formed A-site-bound peptidyl-tRNA and P-site-bound deacylated tRNA move to the P and E sites, respectively. Catalyzes the coordinated movement of the two tRNA molecules, the mRNA and conformational changes in the ribosome. This is Elongation factor 2 (eft201) from Schizosaccharomyces pombe (strain 972 / ATCC 24843) (Fission yeast).